The sequence spans 1343 residues: DNA-directed RNA polymerase subunit beta (1343 aa).

The protein belongs to the RNA polymerase beta chain family. In terms of assembly, the RNAP catalytic core consists of 2 alpha, 1 beta, 1 beta' and 1 omega subunit. When a sigma factor is associated with the core the holoenzyme is formed, which can initiate transcription.

The enzyme catalyses RNA(n) + a ribonucleoside 5'-triphosphate = RNA(n+1) + diphosphate. DNA-dependent RNA polymerase catalyzes the transcription of DNA into RNA using the four ribonucleoside triphosphates as substrates. In Shewanella frigidimarina (strain NCIMB 400), this protein is DNA-directed RNA polymerase subunit beta.